The chain runs to 243 residues: Venom nerve growth factor 2 (243 aa).

The signal sequence occupies residues 1–18 (MSMLCYTLIIAFLIGIWA). Residues 19-125 (APKSEDNVPL…TLNRNIRAKR (107 aa)) constitute a propeptide that is removed on maturation. The span at 47-66 (GLKTSRNTDQRHPAPKKAED) shows a compositional bias: basic and acidic residues. The disordered stretch occupies residues 47 to 67 (GLKTSRNTDQRHPAPKKAEDQ). Disulfide bonds link C139/C204 and C192/C234. The N-linked (GlcNAc...) asparagine glycan is linked to N148.

It belongs to the NGF-beta family. As to quaternary structure, homodimer; non-covalently linked. Expressed by the venom gland.

It is found in the secreted. In terms of biological role, nerve growth factor is important for the development and maintenance of the sympathetic and sensory nervous systems. It stimulates division and differentiation of sympathetic and embryonic sensory neurons as well as basal forebrain cholinergic neurons in the brain. Its relevance in the snake venom is not clear. However, it has been shown to inhibit metalloproteinase-dependent proteolysis of platelet glycoprotein Ib alpha, suggesting a metalloproteinase inhibition to prevent metalloprotease autodigestion and/or protection against prey proteases. Binds a lipid between the two protein chains in the homodimer. The lipid-bound form promotes histamine relase from mouse mast cells, contrary to the lipid-free form. This is Venom nerve growth factor 2 from Pseudonaja textilis (Eastern brown snake).